The following is a 219-amino-acid chain: Cytidylate kinase (219 aa).

ATP is bound at residue 21–29; sequence GPAASGKGT.

It belongs to the cytidylate kinase family. Type 1 subfamily.

It localises to the cytoplasm. The catalysed reaction is CMP + ATP = CDP + ADP. It carries out the reaction dCMP + ATP = dCDP + ADP. This chain is Cytidylate kinase, found in Rickettsia africae (strain ESF-5).